The following is a 134-amino-acid chain: Phosphoribosyl-AMP cyclohydrolase (134 aa).

Asp-77 provides a ligand contact to Mg(2+). Cys-78 contacts Zn(2+). Asp-79 and Asp-81 together coordinate Mg(2+). Residues Cys-95 and Cys-102 each coordinate Zn(2+).

It belongs to the PRA-CH family. In terms of assembly, homodimer. The cofactor is Mg(2+). Zn(2+) is required as a cofactor.

It localises to the cytoplasm. The enzyme catalyses 1-(5-phospho-beta-D-ribosyl)-5'-AMP + H2O = 1-(5-phospho-beta-D-ribosyl)-5-[(5-phospho-beta-D-ribosylamino)methylideneamino]imidazole-4-carboxamide. It functions in the pathway amino-acid biosynthesis; L-histidine biosynthesis; L-histidine from 5-phospho-alpha-D-ribose 1-diphosphate: step 3/9. In terms of biological role, catalyzes the hydrolysis of the adenine ring of phosphoribosyl-AMP. The chain is Phosphoribosyl-AMP cyclohydrolase from Pseudomonas aeruginosa (strain LESB58).